Consider the following 344-residue polypeptide: 2,3,4,5-tetrahydropyridine-2,6-dicarboxylate N-succinyltransferase (344 aa).

A Mg(2+)-binding site is contributed by glutamate 205. Residue glutamate 221 is the Acyl-anhydride intermediate of the active site. Succinyl-CoA contacts are provided by residues arginine 223, glycine 238, serine 241, alanine 264, 279 to 280, 287 to 289, lysine 304, and 317 to 320; these read EA, GTK, and RRNS.

This sequence belongs to the type 2 tetrahydrodipicolinate N-succinyltransferase family. In terms of assembly, homotrimer. Magnesium ions are not essential for catalysis. serves as cofactor.

It localises to the cytoplasm. It catalyses the reaction (S)-2,3,4,5-tetrahydrodipicolinate + succinyl-CoA + H2O = (S)-2-succinylamino-6-oxoheptanedioate + CoA. It functions in the pathway amino-acid biosynthesis; L-lysine biosynthesis via DAP pathway; LL-2,6-diaminopimelate from (S)-tetrahydrodipicolinate (succinylase route): step 1/3. Its activity is regulated as follows. Weakly inhibited by D-2-aminopimelate. In terms of biological role, catalyzes the conversion of the cyclic tetrahydrodipicolinate (THDP) into the acyclic N-succinyl-L-2-amino-6-oxopimelate using succinyl-CoA. Displays succinyl transferase activity with L-2-aminopimelate and succinyl-CoA as substrates. This chain is 2,3,4,5-tetrahydropyridine-2,6-dicarboxylate N-succinyltransferase, found in Pseudomonas aeruginosa (strain ATCC 15692 / DSM 22644 / CIP 104116 / JCM 14847 / LMG 12228 / 1C / PRS 101 / PAO1).